The sequence spans 399 residues: Nicotinate phosphoribosyltransferase 1 (399 aa).

Residue H224 is modified to Phosphohistidine; by autocatalysis.

The protein belongs to the NAPRTase family. Transiently phosphorylated on a His residue during the reaction cycle. Phosphorylation strongly increases the affinity for substrates and increases the rate of nicotinate D-ribonucleotide production. Dephosphorylation regenerates the low-affinity form of the enzyme, leading to product release.

The enzyme catalyses nicotinate + 5-phospho-alpha-D-ribose 1-diphosphate + ATP + H2O = nicotinate beta-D-ribonucleotide + ADP + phosphate + diphosphate. It functions in the pathway cofactor biosynthesis; NAD(+) biosynthesis; nicotinate D-ribonucleotide from nicotinate: step 1/1. Functionally, catalyzes the synthesis of beta-nicotinate D-ribonucleotide from nicotinate and 5-phospho-D-ribose 1-phosphate at the expense of ATP. The sequence is that of Nicotinate phosphoribosyltransferase 1 from Pseudomonas aeruginosa (strain ATCC 15692 / DSM 22644 / CIP 104116 / JCM 14847 / LMG 12228 / 1C / PRS 101 / PAO1).